A 615-amino-acid chain; its full sequence is Hypermethylated in cancer 2 protein (615 aa).

In terms of domain architecture, BTB spans 46 to 109 (CDVIIMVENS…IYTGKLLPSD (64 aa)). Residues 144 to 167 (KPFGSGRAGSTGMGRPPRSQRLST) form a disordered region. A phosphoserine mark is found at S166, S169, and S197. 2 disordered regions span residues 182 to 208 (RKGAHAPQELPQAKGSDDELFLGGSNQ) and 229 to 421 (GCSS…SGHA). The tract at residues 246 to 250 (GLDLS) is binding to CtBP. Over residues 280–296 (SPPAASAPPVANSASYS) the composition is skewed to low complexity. Over residues 336–356 (KKEWGKKEPVAGSPFERREAG) the composition is skewed to basic and acidic residues. Position 348 is a phosphoserine (S348). Positions 379–388 (ASGAGPSGPY) are enriched in low complexity. At S412 the chain carries Phosphoserine. 5 C2H2-type zinc fingers span residues 442–469 (YVCIPCAKGFPSSEQLNAHVETHTEEEL), 505–532 (FKCSVCEKTYKDPATLRQHEKTHWLTRP), 533–560 (FPCNICGKMFTQRGTMTRHMRSHLGLKP), 561–588 (FACDECGMRFTRQYRLTEHMRVHSGEKP), and 589–615 (YECQLCGGKFTQQRNLISHLRMHTSPS).

The protein belongs to the krueppel C2H2-type zinc-finger protein family. Hic subfamily. In terms of assembly, self-associates. Interacts with HIC1. Highest levels in cerebellum.

The protein localises to the nucleus. In terms of biological role, transcriptional repressor. The protein is Hypermethylated in cancer 2 protein (HIC2) of Homo sapiens (Human).